The primary structure comprises 247 residues: ATP synthase subunit a, chloroplastic (247 aa).

Transmembrane regions (helical) follow at residues 38-58, 95-115, 134-154, 199-219, and 220-240; these read QVLITSWVVITILLGSVVIAV, VPFIGTMFLFIFVSNWSGALL, INTTVALALLTSAAYFYAGLS, LVVVVLVSLVPLVVPIPVMFL, and GLFTSGIQALIFATLAAAYIG.

It belongs to the ATPase A chain family. As to quaternary structure, F-type ATPases have 2 components, CF(1) - the catalytic core - and CF(0) - the membrane proton channel. CF(1) has five subunits: alpha(3), beta(3), gamma(1), delta(1), epsilon(1). CF(0) has four main subunits: a, b, b' and c.

The protein localises to the plastid. The protein resides in the chloroplast thylakoid membrane. In terms of biological role, key component of the proton channel; it plays a direct role in the translocation of protons across the membrane. The polypeptide is ATP synthase subunit a, chloroplastic (Lolium perenne (Perennial ryegrass)).